A 158-amino-acid chain; its full sequence is NADH-quinone oxidoreductase subunit B (158 aa).

[4Fe-4S] cluster-binding residues include Cys-37, Cys-38, Cys-102, and Cys-132.

It belongs to the complex I 20 kDa subunit family. In terms of assembly, NDH-1 is composed of 14 different subunits. Subunits NuoB, C, D, E, F, and G constitute the peripheral sector of the complex. [4Fe-4S] cluster serves as cofactor.

The protein resides in the cell inner membrane. The enzyme catalyses a quinone + NADH + 5 H(+)(in) = a quinol + NAD(+) + 4 H(+)(out). In terms of biological role, NDH-1 shuttles electrons from NADH, via FMN and iron-sulfur (Fe-S) centers, to quinones in the respiratory chain. Couples the redox reaction to proton translocation (for every two electrons transferred, four hydrogen ions are translocated across the cytoplasmic membrane), and thus conserves the redox energy in a proton gradient. This Methylobacillus flagellatus (strain ATCC 51484 / DSM 6875 / VKM B-1610 / KT) protein is NADH-quinone oxidoreductase subunit B.